The following is an 846-amino-acid chain: Aminopeptidase N (846 aa).

Substrate contacts are provided by residues Glu120 and Gly252–Asn256. His288 is a Zn(2+) binding site. The active-site Proton acceptor is the Glu289. 2 residues coordinate Zn(2+): His292 and Glu311.

It belongs to the peptidase M1 family. In terms of assembly, monomer. It depends on Zn(2+) as a cofactor.

The protein resides in the cytoplasm. The enzyme catalyses Release of an N-terminal amino acid, Xaa-|-Yaa- from a peptide, amide or arylamide. Xaa is preferably Ala, but may be most amino acids including Pro (slow action). When a terminal hydrophobic residue is followed by a prolyl residue, the two may be released as an intact Xaa-Pro dipeptide.. Aminopeptidase with broad substrate specificity to several peptides. It has more affinity for oligopeptides than for dipeptides. It plays an essential role in the metabolism, it may be involved in nitrogen supply or protein turnover. The polypeptide is Aminopeptidase N (pepN) (Lactococcus lactis subsp. lactis (strain IL1403) (Streptococcus lactis)).